The primary structure comprises 338 residues: Tryptophan--tRNA ligase (338 aa).

Residues 12–14 (QPT) and 20–21 (GN) each bind ATP. The 'HIGH' region signature appears at 13–21 (PTGDLHIGN). Residue Asp136 participates in L-tryptophan binding. ATP is bound by residues 148–150 (GED), Ile191, and 200–204 (KMSKS). The short motif at 200–204 (KMSKS) is the 'KMSKS' region element.

This sequence belongs to the class-I aminoacyl-tRNA synthetase family. In terms of assembly, homodimer.

The protein resides in the cytoplasm. The enzyme catalyses tRNA(Trp) + L-tryptophan + ATP = L-tryptophyl-tRNA(Trp) + AMP + diphosphate + H(+). Catalyzes the attachment of tryptophan to tRNA(Trp). The chain is Tryptophan--tRNA ligase from Prochlorococcus marinus subsp. pastoris (strain CCMP1986 / NIES-2087 / MED4).